A 167-amino-acid chain; its full sequence is Phosphopantetheine adenylyltransferase (167 aa).

Serine 11 is a substrate binding site. Residues 11-12 (SF) and histidine 19 contribute to the ATP site. Substrate-binding residues include lysine 43, threonine 76, and arginine 90. ATP contacts are provided by residues 91–93 (GIR), glutamate 101, and 126–132 (YDALSST).

It belongs to the bacterial CoaD family. Homohexamer. The cofactor is Mg(2+).

It localises to the cytoplasm. It carries out the reaction (R)-4'-phosphopantetheine + ATP + H(+) = 3'-dephospho-CoA + diphosphate. Its pathway is cofactor biosynthesis; coenzyme A biosynthesis; CoA from (R)-pantothenate: step 4/5. Its function is as follows. Reversibly transfers an adenylyl group from ATP to 4'-phosphopantetheine, yielding dephospho-CoA (dPCoA) and pyrophosphate. The protein is Phosphopantetheine adenylyltransferase of Lacticaseibacillus casei (strain BL23) (Lactobacillus casei).